The following is an 836-amino-acid chain: Transcriptional regulatory protein UME6 (836 aa).

Positions 1 to 14 (MLDKARSQSKHMDE) are enriched in basic and acidic residues. Disordered regions lie at residues 1–77 (MLDK…IESL), 92–168 (STCA…CNGH), 218–332 (HLPP…DDQC), and 381–464 (NESS…GFFY). Polar residues-rich tracts occupy residues 39 to 48 (SRATLMNSSQ), 61 to 77 (GANSRHPTISSASIESL), and 92 to 112 (STCAPNNTPVHTPSGSPSLKV). At Ser-114 the chain carries Phosphoserine. Basic and acidic residues predominate over residues 117 to 126 (DIKDDPKEND). Ser-141, Ser-150, and Ser-228 each carry phosphoserine. A compositionally biased stretch (low complexity) spans 226–236 (AVSSPGTTAAG). Polar residues predominate over residues 258-272 (TSANKNNGKTTNSPM). The span at 273 to 305 (SILSRNNSTNNNDNNSIQSSDSRESSNNNEIGG) shows a compositional bias: low complexity. Phosphoserine occurs at positions 316 and 318. Polar residues predominate over residues 316–325 (SPSNDSQVQH). Over residues 381-398 (NESSSNNASSNTDTPTNS) the composition is skewed to low complexity. The segment covering 399-414 (RHANTSSSITSRNNFQ) has biased composition (polar residues). Residues 426–446 (PTSASSFTSTNNNNPQRNNIN) are compositionally biased toward low complexity. Residues 508–594 (NSASSSTKLD…QPIFESNNST (87 aa)) are SIN3-binding. A disordered region spans residues 636-766 (NGKRIDRRLS…ATSSTSQGTR (131 aa)). Ser-645 carries the phosphoserine modification. Polar residues predominate over residues 670 to 679 (VASQTNSDYN). The segment covering 680–702 (SLGESSTSSAPSSPSLKASSGLA) has biased composition (low complexity). The segment covering 718-739 (SKGKNVKPKAKSKAKQSSKKRP) has biased composition (basic residues). Positions 740–751 (NNTTSKSKANNS) are enriched in low complexity. A DNA-binding region (zn(2)-C6 fungal-type) is located at residues 771–798 (CWICRLRKKKCTEERPHCFNCERLKLDC).

Component of the RPD3C(L) complex composed of at least ASH1, CTI6, DEP1, PHO23, RPD3, RXT2, RXT3, SAP30, SDS3, SIN3, UME1 and UME6. Interacts with RIM11, MCK1 and IME1. Phosphorylated by RIM11 and MCK1.

It localises to the nucleus. Functionally, component of the RPD3C(L) histone deacetylase complex (HDAC) responsible for the deacetylation of lysine residues on the N-terminal part of the core histones (H2A, H2B, H3 and H4). Histone deacetylation gives a tag for epigenetic repression and plays an important role in transcriptional regulation, cell cycle progression and developmental events. Binds to the URS1 site (5'-AGCCGCCGA-3') and recruits the RPD3 histone deacetylase complex to the promoters to negatively regulate the expression of many genes including CAR1 (arginase), several required for sporulation, mating type switching, inositol metabolism, and oxidative carbon metabolism. Also recruits the ISW2 chromatin remodeling complex to promoters in a second gene repression pathway. Associates with the master regulator of meiosis IME1 in order to activate the expression of meiosis genes. Has both a positive and negative role in regulating phospholipid biosynthesis. The protein is Transcriptional regulatory protein UME6 (UME6) of Saccharomyces cerevisiae (strain ATCC 204508 / S288c) (Baker's yeast).